The sequence spans 620 residues: Chaperone protein HscA homolog (620 aa).

The protein belongs to the heat shock protein 70 family.

In terms of biological role, chaperone involved in the maturation of iron-sulfur cluster-containing proteins. Has a low intrinsic ATPase activity which is markedly stimulated by HscB. This chain is Chaperone protein HscA homolog, found in Shewanella putrefaciens (strain CN-32 / ATCC BAA-453).